Reading from the N-terminus, the 401-residue chain is Nodulation protein E (401 aa).

The region spanning 2 to 400 (DRRVVITGIG…GTNAVLAFRQ (399 aa)) is the Ketosynthase family 3 (KS3) domain. Residues Cys162, His294, and His331 each act as for beta-ketoacyl synthase activity in the active site. The helical transmembrane segment at 329 to 348 (HAHCLGAASALEMIACVMAI) threads the bilayer.

This sequence belongs to the thiolase-like superfamily. Beta-ketoacyl-ACP synthases family.

It is found in the cell inner membrane. Its function is as follows. Proposed to synthesize NOD factor fatty acyl chain. Involved in the synthesis of a highly unsaturated fatty acid moiety, which forms part of a lipo-oligosaccharide that is responsible for host specificity. The chain is Nodulation protein E (nodE) from Rhizobium leguminosarum bv. trifolii.